The primary structure comprises 152 residues: Transcriptional regulator MraZ (152 aa).

SpoVT-AbrB domains follow at residues 5–52 (ATLV…PLPE) and 81–124 (ASEC…DETT).

The protein belongs to the MraZ family. Forms oligomers.

The protein localises to the cytoplasm. Its subcellular location is the nucleoid. In terms of biological role, negatively regulates its own expression and that of the subsequent genes in the proximal part of the division and cell wall (dcw) gene cluster. Acts by binding directly to DNA. May also regulate the expression of genes outside the dcw cluster. The chain is Transcriptional regulator MraZ from Shigella flexneri serotype 5b (strain 8401).